A 123-amino-acid chain; its full sequence is Small ribosomal subunit protein uS12cz/uS12cy (123 aa).

Belongs to the universal ribosomal protein uS12 family. Part of the 30S ribosomal subunit.

Its subcellular location is the plastid. The protein resides in the chloroplast. With S4 and S5 plays an important role in translational accuracy. Located at the interface of the 30S and 50S subunits. The chain is Small ribosomal subunit protein uS12cz/uS12cy (rps12-A) from Nandina domestica (Heavenly bamboo).